Reading from the N-terminus, the 193-residue chain is Xanthine phosphoribosyltransferase (193 aa).

The xanthine site is built by leucine 20 and asparagine 27. 128-132 (ANGDA) contributes to the 5-phospho-alpha-D-ribose 1-diphosphate binding site. Lysine 156 contributes to the xanthine binding site.

The protein belongs to the purine/pyrimidine phosphoribosyltransferase family. Xpt subfamily. As to quaternary structure, homodimer.

Its subcellular location is the cytoplasm. It carries out the reaction XMP + diphosphate = xanthine + 5-phospho-alpha-D-ribose 1-diphosphate. It functions in the pathway purine metabolism; XMP biosynthesis via salvage pathway; XMP from xanthine: step 1/1. In terms of biological role, converts the preformed base xanthine, a product of nucleic acid breakdown, to xanthosine 5'-monophosphate (XMP), so it can be reused for RNA or DNA synthesis. This Staphylococcus haemolyticus (strain JCSC1435) protein is Xanthine phosphoribosyltransferase.